A 407-amino-acid chain; its full sequence is Large ribosomal subunit protein uL4y (407 aa).

Residues 57–96 (PYAVSKKAGHQTSAESWGTGRAVSRIPRVPGGGTHRAGQA) are disordered.

It belongs to the universal ribosomal protein uL4 family.

This chain is Large ribosomal subunit protein uL4y (RPL4D), found in Arabidopsis thaliana (Mouse-ear cress).